We begin with the raw amino-acid sequence, 100 residues long: Large ribosomal subunit protein bL28 (100 aa).

The interval 1-25 is disordered; sequence MTRRCDITGKSVLSGNNVSHANNKS. Polar residues predominate over residues 11–22; sequence SVLSGNNVSHAN.

This sequence belongs to the bacterial ribosomal protein bL28 family.

The chain is Large ribosomal subunit protein bL28 from Acidiphilium cryptum (strain JF-5).